Reading from the N-terminus, the 140-residue chain is Large ribosomal subunit protein bL17 (140 aa).

It belongs to the bacterial ribosomal protein bL17 family. Part of the 50S ribosomal subunit. Contacts protein L32.

The protein is Large ribosomal subunit protein bL17 of Paracoccus denitrificans (strain Pd 1222).